Here is a 99-residue protein sequence, read N- to C-terminus: Large ribosomal subunit protein bL21 (99 aa).

The protein belongs to the bacterial ribosomal protein bL21 family. Part of the 50S ribosomal subunit. Contacts protein L20.

This protein binds to 23S rRNA in the presence of protein L20. This is Large ribosomal subunit protein bL21 from Mesomycoplasma hyopneumoniae (strain 7448) (Mycoplasma hyopneumoniae).